Here is a 238-residue protein sequence, read N- to C-terminus: Aspartate/glutamate leucyltransferase (238 aa).

This sequence belongs to the R-transferase family. Bpt subfamily.

The protein resides in the cytoplasm. The enzyme catalyses N-terminal L-glutamyl-[protein] + L-leucyl-tRNA(Leu) = N-terminal L-leucyl-L-glutamyl-[protein] + tRNA(Leu) + H(+). The catalysed reaction is N-terminal L-aspartyl-[protein] + L-leucyl-tRNA(Leu) = N-terminal L-leucyl-L-aspartyl-[protein] + tRNA(Leu) + H(+). Functions in the N-end rule pathway of protein degradation where it conjugates Leu from its aminoacyl-tRNA to the N-termini of proteins containing an N-terminal aspartate or glutamate. The chain is Aspartate/glutamate leucyltransferase from Aeromonas salmonicida (strain A449).